We begin with the raw amino-acid sequence, 561 residues long: Hemolysin transporter protein HpmB (561 aa).

A signal peptide spans 1-17 (MKKKVVLLTLLSCFSTS). The region spanning 77 to 150 (LPIKGVYIQG…GELGLYAIEG (74 aa)) is the POTRA domain.

The protein belongs to the TPS (TC 1.B.20) family.

It is found in the cell outer membrane. Interacts with the cell-bound hemolysin. Necessary for the extracellular secretion and activation of the hemolysin. Its function is as follows. Probable member of a two partner secretion pathway (TPS) in which it mediates the secretion of hemolysin. The polypeptide is Hemolysin transporter protein HpmB (hpmB) (Proteus mirabilis).